The primary structure comprises 241 residues: Alpha/beta-tubulin-N-acetyltransferase 9 (241 aa).

An N-acetyltransferase domain is found at 34 to 181 (EELRHLTASE…VTLRLAVSEP (148 aa)).

The protein belongs to the acetyltransferase family. GNAT subfamily.

The catalysed reaction is N-terminal L-methionyl-[tubulin] + acetyl-CoA = N-terminal N(alpha)-acetyl-L-methionyl-[tubulin] + CoA + H(+). Functionally, N-acetyltransferase that mediates the acetylation of the N-terminal residues of alpha- and beta-tubulin. The chain is Alpha/beta-tubulin-N-acetyltransferase 9 (Nat9) from Mus musculus (Mouse).